The primary structure comprises 595 residues: DNA ligase (595 aa).

Residues 32-36 (DEKYD), 81-82 (SL), and Glu113 each bind NAD(+). The N6-AMP-lysine intermediate role is filled by Lys115. NAD(+)-binding residues include Arg136, Glu178, Lys296, and Lys320. 4 residues coordinate Zn(2+): Cys414, Cys417, Cys432, and Cys438.

It belongs to the NAD-dependent DNA ligase family. LigA subfamily. Mg(2+) serves as cofactor. It depends on Mn(2+) as a cofactor.

It carries out the reaction NAD(+) + (deoxyribonucleotide)n-3'-hydroxyl + 5'-phospho-(deoxyribonucleotide)m = (deoxyribonucleotide)n+m + AMP + beta-nicotinamide D-nucleotide.. In terms of biological role, DNA ligase that catalyzes the formation of phosphodiester linkages between 5'-phosphoryl and 3'-hydroxyl groups in double-stranded DNA using NAD as a coenzyme and as the energy source for the reaction. It is essential for DNA replication and repair of damaged DNA. This Blochmanniella pennsylvanica (strain BPEN) protein is DNA ligase.